We begin with the raw amino-acid sequence, 427 residues long: N-acylglucosamine 2-epimerase (427 aa).

The tract at residues 195–216 (LLNLVEQLGEADEELAGKYAEL) is leucine-zipper.

Belongs to the N-acylglucosamine 2-epimerase family. Homodimer. Forms a heterodimer with renin and inhibits its activity.

The enzyme catalyses an N-acyl-D-glucosamine = an N-acyl-D-mannosamine. Its pathway is amino-sugar metabolism; N-acetylneuraminate degradation. With respect to regulation, inhibited by N-ethylmaleimide, 5,5'-dithiobis-2-nitrobenzoate and iodoacetic acid. In terms of biological role, catalyzes the interconversion of N-acetylglucosamine to N-acetylmannosamine. Involved in the N-glycolylneuraminic acid (Neu5Gc) degradation pathway: although human is not able to catalyze formation of Neu5Gc due to the inactive CMAHP enzyme, Neu5Gc is present in food and must be degraded. This chain is N-acylglucosamine 2-epimerase (RENBP), found in Homo sapiens (Human).